We begin with the raw amino-acid sequence, 138 residues long: Superoxide dismutase [Mn] (138 aa).

Residues H2, H49, D133, and H137 each contribute to the Mn(2+) site.

It belongs to the iron/manganese superoxide dismutase family. Mn(2+) serves as cofactor.

It carries out the reaction 2 superoxide + 2 H(+) = H2O2 + O2. Destroys superoxide anion radicals which are normally produced within the cells and which are toxic to biological systems. The sequence is that of Superoxide dismutase [Mn] (sodA) from Mycolicibacterium phlei (Mycobacterium phlei).